A 341-amino-acid chain; its full sequence is MATIKDVAKRANVSTTTVSHVINKTRFVSEETRNAVWAAIKELHYSPSAVARSLKVNHTKSIGLLATSSEAAYFAEIIEAVEKNCFQKGYTLILGNAWNNLEKQRAYLSMMAQKRVDGLLVMCSEYPEPLLAMLEEYRHIPMVVMDWGEAKADFTDAVIDNAFEGGYMAGRYLIERGHREIGVIPGPLERNTGAGRLAGFMKAMEEAMIKVPESWIVQGDFEPESGYRAMQQILSQPHRPTAVFCGGDIMAMGALCAADEMGLRVPQDVSLIGYDNVRNARYFTPALTTIHQPKDSLGETAFNMLLDRIVNKREEPQSIEVHPRLIERRSVADGPFRDYRR.

Residues 2–56 (ATIKDVAKRANVSTTTVSHVINKTRFVSEETRNAVWAAIKELHYSPSAVARSLKV) form the HTH lacI-type domain. The segment at residues 4–23 (IKDVAKRANVSTTTVSHVIN) is a DNA-binding region (H-T-H motif). The DNA-binding element occupies 48–56 (SAVARSLKV). Hypoxanthine contacts are provided by Tyr73, Arg190, Thr192, Phe221, and Asp275.

In terms of assembly, homodimer.

The protein operates within purine metabolism; purine nucleotide biosynthesis [regulation]. Its function is as follows. Is the main repressor of the genes involved in the de novo synthesis of purine nucleotides, regulating purB, purC, purEK, purF, purHD, purL, purMN and guaBA expression. PurR is allosterically activated to bind its cognate DNA by binding the purine corepressors, hypoxanthine or guanine, thereby effecting transcription repression. The chain is HTH-type transcriptional repressor PurR from Escherichia coli O139:H28 (strain E24377A / ETEC).